A 400-amino-acid polypeptide reads, in one-letter code: Acetate kinase (400 aa).

Residue asparagine 10 coordinates Mg(2+). Lysine 17 provides a ligand contact to ATP. Arginine 89 contributes to the substrate binding site. The Proton donor/acceptor role is filled by aspartate 148. Residues 208-212 (HLGNG), 283-285 (DCR), and 331-335 (GIGEN) each bind ATP. Glutamate 385 is a Mg(2+) binding site.

This sequence belongs to the acetokinase family. Homodimer. Mg(2+) serves as cofactor. Requires Mn(2+) as cofactor.

The protein localises to the cytoplasm. It catalyses the reaction acetate + ATP = acetyl phosphate + ADP. The protein operates within metabolic intermediate biosynthesis; acetyl-CoA biosynthesis; acetyl-CoA from acetate: step 1/2. Catalyzes the formation of acetyl phosphate from acetate and ATP. Can also catalyze the reverse reaction. This chain is Acetate kinase, found in Haemophilus ducreyi (strain 35000HP / ATCC 700724).